The following is an 899-amino-acid chain: MERPSFLDQEPPAGYVPGIGRGATGFSTKEKQVVSNDDKGRRIPKRYRENLNNHLQSQPKDDEDDEAANVFKTLELKLAQKKKKRANEKDDDNSVDSSNVKRQFADLKESLAAVTESEWMDIPDATDFTRRNKRNRIQEQLNRKTYAAPDSLIPGNVDLNKLTEEREKLLQSQIDENLAQLTKNASNPIQVNKPNAATDALSYLKDLENDRVNSLSDATLEDLQKMRTILKSYRKADPTNPQGWIASARLEEKARKFSVAKKIIENGCQECPRSSDIWLENIRLHESDVHYCKTLVATAINFNPTSPLLWFKAIDLESTTVNKYRVVRKALQEIPRDEGLWKLAVSFEADKAQVIKMLEKATQFIPQSMDLLTAYTNLQSYHNAKMTLNSFRKILPQEPEIWIISTLLEERNNPDIPVDKLVSLLKEGLLELSKNGYKATLSAWLKRAEALNDAPNSNLTCQAIVYAILEWLRESGEYESELNNVDQILEKMPHSKVQIAVLKKLIQWDPCDTVLWSRLKMATESYHKIEELLAFFQELLFQTKNSDDIRANMREKSPGLLMMYVSEYWKAQKGDTRQTLVLIDQIIDFAPHNLDLRFFKIKLLGRSLQLDELRDFFQQTFSSLEDFKISGTERLYYKYVNFLRYQDLNEEAIKFLNERCLKSFPICHKFFLQLGQIYHSMGNIEMSRETYLSGTRLVPNCPLLWVSLSKIDEIDLKNPVRARSILDRGLLKNPDDVLFYIAKIQMEIRLGNLDQAELLVTQALQKFPSNALLWVEQIKLFKHGNKSSLKKTIFQDALRRTQNDHRVLLEIGVSFYAEAQYETSLKWLERALKKCSRYGDTWVWLFRTYARLGKDTVDLYNMFDQCEPTYGPEWIAASKNVKMQYCTPREILLRLMNDK.

Residues 1 to 65 (MERPSFLDQE…QSQPKDDEDD (65 aa)) form a disordered region. The span at 28–51 (TKEKQVVSNDDKGRRIPKRYRENL) shows a compositional bias: basic and acidic residues. HAT repeat units follow at residues 221 to 253 (EDLQKMRTILKSYRKADPTNPQGWIASARLEEK), 255 to 287 (RKFSVAKKIIENGCQECPRSSDIWLENIRLHES), 289 to 318 (VHYCKTLVATAINFNPTSPLLWFKAIDLES), 319 to 350 (TTVNKYRVVRKALQEIPRDEGLWKLAVSFEAD), 352 to 381 (AQVIKMLEKATQFIPQSMDLLTAYTNLQSY), 383 to 414 (NAKMTLNSFRKILPQEPEIWIISTLLEERNNP), 493 to 525 (PHSKVQIAVLKKLIQWDPCDTVLWSRLKMATES), 545 to 578 (NSDDIRANMREKSPGLLMMYVSEYWKAQKGDTRQ), 608 to 645 (LQLDELRDFFQQTFSSLEDFKISGTERLYYKYVNFLRY), 648 to 680 (LNEEAIKFLNERCLKSFPICHKFFLQLGQIYHS), 682 to 714 (GNIEMSRETYLSGTRLVPNCPLLWVSLSKIDEI), 751 to 783 (GNLDQAELLVTQALQKFPSNALLWVEQIKLFKH), and 819 to 851 (AQYETSLKWLERALKKCSRYGDTWVWLFRTYAR).

Component of the U4/U6-U5 tri-snRNP complex composed of the U4, U6 and U5 snRNAs and at least PRP3, PRP4, PRP6, PRP8, PRP18, PRP31, PRP38, SNU13, SNU23, SNU66, SNU114, SPP381, SMB1, SMD1, SMD2, SMD3, SMX2, SMX3, LSM2, LSM3, LSM4, LSM5, LSM6, LSM7, LSM8, BRR2 and DIB1.

The protein localises to the nucleus. Participates in pre-mRNA splicing. Part of the U4/U5/U6 tri-snRNP complex, one of the building blocks of the spliceosome. In Saccharomyces cerevisiae (strain ATCC 204508 / S288c) (Baker's yeast), this protein is Pre-mRNA-splicing factor 6 (PRP6).